Consider the following 28-residue polypeptide: Putative antitoxin AF_1079 (28 aa).

It belongs to the UPF0165 family.

Possibly the antitoxin component of a type II toxin-antitoxin (TA) system. The sequence is that of Putative antitoxin AF_1079 from Archaeoglobus fulgidus (strain ATCC 49558 / DSM 4304 / JCM 9628 / NBRC 100126 / VC-16).